A 61-amino-acid polypeptide reads, in one-letter code: Cytochrome c oxidase subunit 9, mitochondrial (61 aa).

At 1–13 (MAIAPITGTLKRK) the chain is on the mitochondrial matrix side. A helical membrane pass occupies residues 14–36 (IITDISIGFACGFALATGYWYIE). Residues 37–56 (HKPLIVKREAYYAKLKAQQE) lie on the Mitochondrial intermembrane side of the membrane. A propeptide spans 57 to 61 (AEDSA) (removed in mature form).

This sequence belongs to the fungal cytochrome c oxidase subunit 7a family. In terms of assembly, component of the cytochrome c oxidase (complex IV, CIV), a multisubunit enzyme composed of a catalytic core of 3 subunits and several supernumerary subunits. The complex exists as a monomer or a dimer and forms supercomplexes (SCs) in the inner mitochondrial membrane with ubiquinol-cytochrome c oxidoreductase (cytochrome b-c1 complex, complex III, CIII).

The protein resides in the mitochondrion inner membrane. Its pathway is energy metabolism; oxidative phosphorylation. Functionally, component of the cytochrome c oxidase, the last enzyme in the mitochondrial electron transport chain which drives oxidative phosphorylation. The respiratory chain contains 3 multisubunit complexes succinate dehydrogenase (complex II, CII), ubiquinol-cytochrome c oxidoreductase (cytochrome b-c1 complex, complex III, CIII) and cytochrome c oxidase (complex IV, CIV), that cooperate to transfer electrons derived from NADH and succinate to molecular oxygen, creating an electrochemical gradient over the inner membrane that drives transmembrane transport and the ATP synthase. Cytochrome c oxidase is the component of the respiratory chain that catalyzes the reduction of oxygen to water. Electrons originating from reduced cytochrome c in the intermembrane space (IMS) are transferred via the dinuclear copper A center (CU(A)) of subunit 2 and heme A of subunit 1 to the active site in subunit 1, a binuclear center (BNC) formed by heme A3 and copper B (CU(B)). The BNC reduces molecular oxygen to 2 water molecules using 4 electrons from cytochrome c in the IMS and 4 protons from the mitochondrial matrix. The sequence is that of Cytochrome c oxidase subunit 9, mitochondrial (COX9) from Debaryomyces hansenii (strain ATCC 36239 / CBS 767 / BCRC 21394 / JCM 1990 / NBRC 0083 / IGC 2968) (Yeast).